Reading from the N-terminus, the 366-residue chain is Cellular tumor antigen p53 (366 aa).

The transcription activation (acidic) stretch occupies residues 1 to 41; it reads MMDEQGLDGMQILPGSQDSFSELWASVQTPSIATIAEEFDD. The DNA-binding element occupies 80–267; it reads DYPGEYGFQL…KTDEESSTKT (188 aa). Positions 154, 157, 213, and 217 each coordinate Zn(2+). The tract at residues 248–255 is interaction with DNA; it reads RVCACPGR. Positions 255-264 are enriched in basic and acidic residues; that stretch reads RDRKTDEESS. The interval 255 to 305 is disordered; it reads RDRKTDEESSTKTPNGPKQTKKRKQAPSNSAPHTTTVMKSKSSSSAEEEDK. A Bipartite nuclear localization signal motif is present at residues 275–295; sequence KKRKQAPSNSAPHTTTVMKSK. Residues 280–292 are compositionally biased toward polar residues; the sequence is APSNSAPHTTTVM. The tract at residues 305-336 is oligomerization; that stretch reads KEVFTVLVKGRERYEIIKKINEAFEGAAEKEK. A Nuclear export signal motif is present at residues 319–330; the sequence is EIIKKINEAFEG. Positions 332 to 366 are disordered; the sequence is AEKEKAKNKVAVKQELPVPSSGKRLVQRGERSDSD. Positions 341–362 are basic (repression of DNA-binding); it reads VAVKQELPVPSSGKRLVQRGER.

The protein belongs to the p53 family. In terms of assembly, binds DNA as a homotetramer. Requires Zn(2+) as cofactor.

Its subcellular location is the cytoplasm. The protein resides in the nucleus. Multifunctional transcription factor that induces cell cycle arrest, DNA repair or apoptosis upon binding to its target DNA sequence. Acts as a tumor suppressor in many tumor types; induces growth arrest or apoptosis depending on the physiological circumstances and cell type. Negatively regulates cell division by controlling expression of a set of genes required for this process. One of the activated genes is an inhibitor of cyclin-dependent kinases. Apoptosis induction seems to be mediated either by stimulation of BAX and FAS antigen expression, or by repression of Bcl-2 expression. The protein is Cellular tumor antigen p53 (tp53) of Platichthys flesus (European flounder).